The following is a 671-amino-acid chain: ABC transporter ATP-binding protein/permease wht-1 (671 aa).

Residues 1–408 (MHKAPISTLI…SWLTVIRDPN (408 aa)) lie on the Cytoplasmic side of the membrane. An ABC transporter domain is found at 64-310 (TNFVDRFRNN…FEKCGYPCPA (247 aa)). 100 to 107 (GSSGAGKT) is an ATP binding site. A helical transmembrane segment spans residues 409–429 (LLSVRLLQILITAFITGIVFF). At 430–451 (QTPVTPATIISINGIMFNHIRN) the chain is on the extracellular side. The helical transmembrane segment at 452–472 (MNFMLQFPNVPVITAELPIVL) threads the bilayer. The Cytoplasmic portion of the chain corresponds to 473 to 497 (RENANGVYRTSAYFLAKNIAELPQY). The chain crosses the membrane as a helical span at residues 498-518 (IILPILYNTIVYWMSGLYPNF). The Extracellular portion of the chain corresponds to 519 to 525 (WNYCFAS). Residues 526-546 (LVTILITNVAISISYAVATIF) form a helical membrane-spanning segment. Residues 547–550 (ANTD) are Cytoplasmic-facing. The helical transmembrane segment at 551 to 571 (VAMTILPIFVVPIMAFGGFFI) threads the bilayer. The Extracellular portion of the chain corresponds to 572 to 644 (TFDAIPSYFK…DFSASHKIFD (73 aa)). Residues 645–665 (ISILFGMFIGIRIIAYVALLI) form a helical membrane-spanning segment. The Cytoplasmic portion of the chain corresponds to 666–671 (RSYNNT).

Belongs to the ABC transporter superfamily. ABCG family. Eye pigment precursor importer (TC 3.A.1.204) subfamily. Expressed in the intestine in both larvae and adults. Expressed in the gut of males.

It localises to the membrane. Its function is as follows. Required for efficient RNA interference (RNAi). Plays a role in germline development. The sequence is that of ABC transporter ATP-binding protein/permease wht-1 from Caenorhabditis elegans.